An 81-amino-acid polypeptide reads, in one-letter code: Short neurotoxin 2 (81 aa).

A signal peptide spans 1-21 (MKTLLLTLVVVTIVCLDLGYT). 4 disulfides stabilise this stretch: C24–C43, C38–C60, C62–C73, and C74–C79.

The protein belongs to the three-finger toxin family. Short-chain subfamily. Type I alpha-neurotoxin sub-subfamily. In terms of tissue distribution, expressed by the venom gland.

It is found in the secreted. Functionally, binds to muscle nicotinic acetylcholine receptor (nAChR) and inhibit acetylcholine from binding to the receptor, thereby impairing neuromuscular transmission. This is Short neurotoxin 2 from Hydrophis peronii (Spiny-headed seasnake).